The chain runs to 255 residues: Flagellar brake protein YcgR (255 aa).

A PilZ domain is found at 122–240; the sequence is QRRTYFRINT…ERDLQQVIFE (119 aa).

It belongs to the YcgR family. In terms of assembly, monomer. Interacts with the flagellar basal bodies.

It localises to the bacterial flagellum basal body. Its function is as follows. Acts as a flagellar brake, regulating swimming and swarming in a bis-(3'-5') cyclic diguanylic acid (c-di-GMP)-dependent manner. Binds 1 c-di-GMP dimer per subunit. Increasing levels of c-di-GMP lead to decreased motility. This Pectobacterium carotovorum subsp. carotovorum (strain PC1) protein is Flagellar brake protein YcgR.